The sequence spans 457 residues: Argininosuccinate lyase (457 aa).

This sequence belongs to the lyase 1 family. Argininosuccinate lyase subfamily.

It localises to the cytoplasm. The enzyme catalyses 2-(N(omega)-L-arginino)succinate = fumarate + L-arginine. The protein operates within amino-acid biosynthesis; L-arginine biosynthesis; L-arginine from L-ornithine and carbamoyl phosphate: step 3/3. This is Argininosuccinate lyase from Aquifex aeolicus (strain VF5).